The primary structure comprises 230 residues: Ribose-5-phosphate isomerase A (230 aa).

Residues Thr-31 to Thr-34, Asp-88 to Asp-91, and Lys-101 to Gly-104 contribute to the substrate site. Glu-110 serves as the catalytic Proton acceptor. Lys-128 is a binding site for substrate.

It belongs to the ribose 5-phosphate isomerase family. Homodimer.

The catalysed reaction is aldehydo-D-ribose 5-phosphate = D-ribulose 5-phosphate. It functions in the pathway carbohydrate degradation; pentose phosphate pathway; D-ribose 5-phosphate from D-ribulose 5-phosphate (non-oxidative stage): step 1/1. Its function is as follows. Catalyzes the reversible conversion of ribose-5-phosphate to ribulose 5-phosphate. This chain is Ribose-5-phosphate isomerase A, found in Lactobacillus helveticus (strain DPC 4571).